Here is a 338-residue protein sequence, read N- to C-terminus: Flap endonuclease 1 (338 aa).

The interval 1 to 98 is N-domain; sequence MGTDIGDLLL…DTLAKRHEVR (98 aa). Mg(2+)-binding residues include Asp-27, Asp-80, Glu-152, Glu-154, Asp-173, Asp-175, and Asp-236. The tract at residues 116-257 is I-domain; sequence EAYKYAQASS…RALKLVKEHG (142 aa). Positions 330-338 are interaction with PCNA; the sequence is SQSTLDQWF.

Belongs to the XPG/RAD2 endonuclease family. FEN1 subfamily. Interacts with PCNA. PCNA stimulates the nuclease activity without altering cleavage specificity. Mg(2+) serves as cofactor.

Functionally, structure-specific nuclease with 5'-flap endonuclease and 5'-3' exonuclease activities involved in DNA replication and repair. During DNA replication, cleaves the 5'-overhanging flap structure that is generated by displacement synthesis when DNA polymerase encounters the 5'-end of a downstream Okazaki fragment. Binds the unpaired 3'-DNA end and kinks the DNA to facilitate 5' cleavage specificity. Cleaves one nucleotide into the double-stranded DNA from the junction in flap DNA, leaving a nick for ligation. Also involved in the base excision repair (BER) pathway. Acts as a genome stabilization factor that prevents flaps from equilibrating into structures that lead to duplications and deletions. Also possesses 5'-3' exonuclease activity on nicked or gapped double-stranded DNA. The protein is Flap endonuclease 1 of Methanococcoides burtonii (strain DSM 6242 / NBRC 107633 / OCM 468 / ACE-M).